Consider the following 193-residue polypeptide: dCTP deaminase (193 aa).

Residues 110–115 (RSSLAR), Asp128, 136–138 (VLE), Tyr171, Lys178, and Gln182 contribute to the dCTP site. Glu138 functions as the Proton donor/acceptor in the catalytic mechanism. Positions 174–193 (RKNAKYKDQQEAVASRISQD) are disordered.

It belongs to the dCTP deaminase family. Homotrimer.

The enzyme catalyses dCTP + H2O + H(+) = dUTP + NH4(+). It participates in pyrimidine metabolism; dUMP biosynthesis; dUMP from dCTP (dUTP route): step 1/2. Catalyzes the deamination of dCTP to dUTP. In Shewanella sp. (strain W3-18-1), this protein is dCTP deaminase.